Consider the following 187-residue polypeptide: Elongation factor P (187 aa).

Position 34 is an N6-(3,6-diaminohexanoyl)-5-hydroxylysine (lysine 34).

The protein belongs to the elongation factor P family. In terms of processing, may be beta-lysylated on the epsilon-amino group of Lys-34 by the combined action of EpmA and EpmB, and then hydroxylated on the C5 position of the same residue by EpmC (if this protein is present). Lysylation is critical for the stimulatory effect of EF-P on peptide-bond formation. The lysylation moiety may extend toward the peptidyltransferase center and stabilize the terminal 3-CCA end of the tRNA. Hydroxylation of the C5 position on Lys-34 may allow additional potential stabilizing hydrogen-bond interactions with the P-tRNA.

It localises to the cytoplasm. It functions in the pathway protein biosynthesis; polypeptide chain elongation. Involved in peptide bond synthesis. Alleviates ribosome stalling that occurs when 3 or more consecutive Pro residues or the sequence PPG is present in a protein, possibly by augmenting the peptidyl transferase activity of the ribosome. Modification of Lys-34 is required for alleviation. This is Elongation factor P from Vesicomyosocius okutanii subsp. Calyptogena okutanii (strain HA).